Here is a 154-residue protein sequence, read N- to C-terminus: Transmembrane protein 35B (154 aa).

The N-terminal stretch at 1–22 is a signal peptide; the sequence is MALLLSVLRVLLGGFFALVGLA. 3 helical membrane passes run 63–83, 85–105, and 112–132; these read IAVG…PPML, EISN…LAAL, and CIPA…QLLA.

It belongs to the DoxX family.

It is found in the membrane. In Homo sapiens (Human), this protein is Transmembrane protein 35B.